We begin with the raw amino-acid sequence, 113 residues long: Large ribosomal subunit protein uL22 (113 aa).

This sequence belongs to the universal ribosomal protein uL22 family. In terms of assembly, part of the 50S ribosomal subunit.

Functionally, this protein binds specifically to 23S rRNA; its binding is stimulated by other ribosomal proteins, e.g. L4, L17, and L20. It is important during the early stages of 50S assembly. It makes multiple contacts with different domains of the 23S rRNA in the assembled 50S subunit and ribosome. The globular domain of the protein is located near the polypeptide exit tunnel on the outside of the subunit, while an extended beta-hairpin is found that lines the wall of the exit tunnel in the center of the 70S ribosome. The chain is Large ribosomal subunit protein uL22 from Halothermothrix orenii (strain H 168 / OCM 544 / DSM 9562).